The chain runs to 200 residues: Recombination protein RecR (200 aa).

The C4-type zinc finger occupies 57–72 (CRQCRTLTEDDLCPQC). The Toprim domain maps to 80–175 (TLLCVVEGPM…IASRIAHGVP (96 aa)).

This sequence belongs to the RecR family.

Functionally, may play a role in DNA repair. It seems to be involved in an RecBC-independent recombinational process of DNA repair. It may act with RecF and RecO. This chain is Recombination protein RecR, found in Pseudomonas fluorescens (strain Pf0-1).